A 1020-amino-acid polypeptide reads, in one-letter code: Calcium-transporting ATPase 1 (1020 aa).

At methionine 1 the chain carries N-acetylmethionine. Topologically, residues 1 to 162 are stromal; it reads MESYLNENFG…NQFTESPSRG (162 aa). The segment at 21-32 is interaction with calmodulin; that stretch reads ALQRWRKLCWIV. Serine 46 is subject to Phosphoserine; by CPK. The helical transmembrane segment at 163–183 threads the bilayer; that stretch reads FWLFVWEALQDTTLMILAACA. The Lumenal portion of the chain corresponds to 184 to 201; the sequence is FVSLIVGILMEGWPIGAH. The helical transmembrane segment at 202–222 threads the bilayer; sequence DGLGIVASILLVVFVTATSDY. The Stromal segment spans residues 223–350; it reads RQSLQFKDLD…DDETPLQVKL (128 aa). The helical transmembrane segment at 351–370 threads the bilayer; it reads NGVATIIGKIGLFFAVITFA. The Lumenal portion of the chain corresponds to 371-400; that stretch reads VLVQGLANQKRLDNSHWIWTADELMAMLEY. A helical membrane pass occupies residues 401-418; sequence FAVAVTIVVVAVPEGLPL. At 419–813 the chain is on the stromal side; sequence AVTLSLAFAM…KWGRSVYINI (395 aa). The active-site 4-aspartylphosphate intermediate is aspartate 456. Mg(2+)-binding residues include aspartate 758 and aspartate 762. Residues 814–832 form a helical membrane-spanning segment; sequence QKFVQFQLTVNVVALIVNF. The Lumenal portion of the chain corresponds to 833 to 843; that stretch reads LSACLTGNAPL. A helical transmembrane segment spans residues 844–864; it reads TAVQLLWVNMIMDTLGALALA. Residues 865-884 are Stromal-facing; that stretch reads TEPPQDDLMKRSPVGRKGNF. A helical transmembrane segment spans residues 885–907; it reads ISNVMWRNILGQSLYQLVIIWCL. Over 908 to 919 the chain is Lumenal; sequence QTKGKTMFGLDG. A helical membrane pass occupies residues 920-941; the sequence is PDSDLTLNTLIFNIFVFCQVFN. Residues 942 to 959 lie on the Stromal side of the membrane; the sequence is EISSREMEKIDVFKGILK. A helical membrane pass occupies residues 960 to 981; the sequence is NYVFVAVLTCTVVFQVIIIELL. Residues 982 to 991 lie on the Lumenal side of the membrane; sequence GTFADTTPLN. A helical membrane pass occupies residues 992 to 1013; that stretch reads LGQWLVSIILGFLGMPVAAALK. At 1014 to 1020 the chain is on the stromal side; the sequence is MIPVGSH.

It belongs to the cation transport ATPase (P-type) (TC 3.A.3) family. Type IIB subfamily. In terms of tissue distribution, expressed at higher levels in roots than in leaves.

It is found in the plastid. It localises to the chloroplast inner membrane. The catalysed reaction is Ca(2+)(in) + ATP + H2O = Ca(2+)(out) + ADP + phosphate + H(+). With respect to regulation, activated by calmodulin. This magnesium-dependent enzyme catalyzes the hydrolysis of ATP coupled with the translocation of calcium from the cytosol out of the cell or into organelles. The sequence is that of Calcium-transporting ATPase 1 (ACA1) from Arabidopsis thaliana (Mouse-ear cress).